The chain runs to 2178 residues: DNA-directed RNA polymerase subunit beta (2178 aa).

Insert stretches follow at residues 269–325, 714–1508, and 1703–1900; these read SKKI…TPFV, KRID…LFYN, and KGND…LQPM.

The protein belongs to the RNA polymerase beta chain family. As to quaternary structure, in plastids the minimal PEP RNA polymerase catalytic core is composed of four subunits: alpha, beta, beta', and beta''. When a (nuclear-encoded) sigma factor is associated with the core the holoenzyme is formed, which can initiate transcription.

It localises to the plastid. The protein localises to the chloroplast. It carries out the reaction RNA(n) + a ribonucleoside 5'-triphosphate = RNA(n+1) + diphosphate. Its function is as follows. DNA-dependent RNA polymerase catalyzes the transcription of DNA into RNA using the four ribonucleoside triphosphates as substrates. The chain is DNA-directed RNA polymerase subunit beta from Tupiella akineta (Green alga).